The primary structure comprises 162 residues: Zinc finger protein 593 homolog (162 aa).

The segment at 59–83 adopts a C2H2-type zinc-finger fold; it reads FYCVHCAKYFIDDTAMQAHFRTKVH. The tract at residues 110-162 is disordered; the sequence is VKPKKRAMETQPSKEDVVAGKRIRVEVVPEDTDATDSPSTSKTKRKKVEKMET. Basic and acidic residues predominate over residues 115–136; it reads RAMETQPSKEDVVAGKRIRVEV. Over residues 151–162 the composition is skewed to basic residues; sequence KTKRKKVEKMET.

The protein belongs to the ZNF593/BUD20 C2H2-type zinc-finger protein family. As to quaternary structure, associates with pre-60S ribosomal particles; released from the pre-60S particle very early in the cytoplasm.

Its subcellular location is the nucleus. The protein localises to the cytoplasm. Involved in pre-60S ribosomal particles maturation by promoting the nuclear export of the 60S ribosome. This chain is Zinc finger protein 593 homolog, found in Drosophila melanogaster (Fruit fly).